The sequence spans 331 residues: DNA fragmentation factor subunit alpha (331 aa).

N-acetylmethionine is present on M1. The 80-residue stretch at 17–96 (TLKPCLLRRN…ALASNEKWAY (80 aa)) folds into the CIDE-N domain. The residue at position 243 (T243) is a Phosphothreonine. The interval 305–331 (SLRSISASKASPPGDLQNPKRARQDPT) is disordered. Position 315 is a phosphoserine (S315).

Heterodimer of DFFA and DFFB. Caspase-3 cleaves DFF45 at 2 sites to generate an active factor.

It is found in the cytoplasm. Functionally, inhibitor of the caspase-activated DNase (DFF40). The chain is DNA fragmentation factor subunit alpha (DFFA) from Homo sapiens (Human).